Here is a 134-residue protein sequence, read N- to C-terminus: Large ribosomal subunit protein eL27 (134 aa).

A KOW domain is found at 5-40 (LKSGKVVVVLSGRFAGKKAVIVRNFDDGTSSRPYGH).

It belongs to the eukaryotic ribosomal protein eL27 family.

The chain is Large ribosomal subunit protein eL27 (RPL27) from Pyrobotrys stellatus (Green alga).